We begin with the raw amino-acid sequence, 278 residues long: DNA oxidative demethylase ALKBH2 (278 aa).

Residues 1–49 (MDRFLVKGAVGSLKRRMEQEQTGGGPAGLAEEEGNSKKNPRRAAPGNGV) are disordered. Residues 3–7 (RFLVK) carry the PCNA-binding motif. Substrate-binding positions include 101–103 (FGK) and 121–123 (YTF). Residues 151–256 (TFNFVLINRY…RVNLTFRKIL (106 aa)) enclose the Fe2OG dioxygenase domain. 2-oxoglutarate is bound by residues asparagine 158, tyrosine 160, and histidine 170. Residues histidine 170 and aspartate 172 each contribute to the Fe cation site. Aspartate 173 contributes to the substrate binding site. Histidine 235, arginine 247, threonine 251, and arginine 253 together coordinate 2-oxoglutarate. Residue histidine 235 participates in Fe cation binding.

This sequence belongs to the alkB family. As to quaternary structure, interacts with PCNA homotrimer; this interaction is enhanced during the S-phase of the cell cycle. Interacts with nucleolar proteins NCL, UBTF and NPM1. Interacts with XRCC5-XRCC6 heterodimer. The cofactor is Fe(2+).

The protein resides in the nucleus. The protein localises to the nucleolus. It localises to the nucleoplasm. It catalyses the reaction a methylated nucleobase within DNA + 2-oxoglutarate + O2 = a nucleobase within DNA + formaldehyde + succinate + CO2. The enzyme catalyses an N(1)-methyl-2'-deoxyadenosine in double-stranded DNA + 2-oxoglutarate + O2 = a 2'-deoxyadenosine in double-stranded DNA + formaldehyde + succinate + CO2 + H(+). The catalysed reaction is an N(1)-methyl-2'-deoxyadenosine in single-stranded DNA + 2-oxoglutarate + O2 = a 2'-deoxyadenosine in single-stranded DNA + formaldehyde + succinate + CO2 + H(+). It carries out the reaction an N(3)-methyl-2'-deoxycytidine in double-stranded DNA + 2-oxoglutarate + O2 = a 2'-deoxycytidine in double-stranded DNA + formaldehyde + succinate + CO2 + H(+). It catalyses the reaction an N(3)-methyl-2'-deoxycytidine in single-stranded DNA + 2-oxoglutarate + O2 = a 2'-deoxycytidine in single-stranded DNA + formaldehyde + succinate + CO2 + H(+). The enzyme catalyses a 1,N(6)-etheno-2'-deoxyadenosine in double-stranded DNA + 2-oxoglutarate + O2 + H2O = a 2'-deoxyadenosine in double-stranded DNA + glyoxal + succinate + CO2. The catalysed reaction is a 1,N(6)-etheno-2'-deoxyadenosine in single-stranded DNA + 2-oxoglutarate + O2 + H2O = a 2'-deoxyadenosine in single-stranded DNA + glyoxal + succinate + CO2. It carries out the reaction a 3,N(4)-etheno-2'-deoxycytidine in double-stranded DNA + 2-oxoglutarate + O2 + H2O = a 2'-deoxycytidine in double-stranded DNA + glyoxal + succinate + CO2. It catalyses the reaction a 3,N(4)-etheno-2'-deoxycytidine in single-stranded DNA + 2-oxoglutarate + O2 + H2O = a 2'-deoxycytidine in single-stranded DNA + glyoxal + succinate + CO2. The enzyme catalyses a 1,N(2)-etheno-2'-deoxyguanosine in double-stranded DNA + 2-oxoglutarate + O2 + H2O = a 2'-deoxyguanosine in double-stranded DNA + glyoxal + succinate + CO2. Activated by ascorbate and magnesium ions. Functionally, dioxygenase that repairs alkylated nucleic acid bases by direct reversal oxidative dealkylation. Can process both double-stranded (ds) and single-stranded (ss) DNA substrates, with a strong preference for dsDNA. Uses molecular oxygen, 2-oxoglutarate and iron as cofactors to oxidize the alkyl groups that are subsequently released as aldehydes, regenerating the undamaged bases. Probes the base pair stability, locates a weakened base pair and flips the damaged base to accommodate the lesion in its active site for efficient catalysis. Repairs monoalkylated bases, specifically N1-methyladenine and N3-methylcytosine, as well as higher order alkyl adducts such as bases modified with exocyclic bridged adducts known as etheno adducts including 1,N6-ethenoadenine, 3,N4-ethenocytosine and 1,N2-ethenoguanine. Acts as a gatekeeper of genomic integrity under alkylation stress. Efficiently repairs alkylated lesions in ribosomal DNA (rDNA). These lesions can cause ss- and dsDNA strand breaks that severely impair rDNA transcription. In a response mechanism to DNA damage, associates with PCNA at replication forks to repair alkylated adducts prior to replication. The polypeptide is DNA oxidative demethylase ALKBH2 (ALKBH2) (Bos taurus (Bovine)).